Consider the following 403-residue polypeptide: MNILVVNAGSSSLKSSLFLTVEGRVEATPIWQAQVDFTYKPGEALIQTRRRGGGWEPFPSASPEGGIGQLAPLFQSLWQGEGSLLPQAAEIGGVGHRVVHGGSLYRQPTLITPEVERAIEQLIPLAPAHNPAALAGIRLLRQLLPGIPQVAVFDTAFHQQMPLAAALYPLPYAWAEQGIRRYGFHGINHEHCARRAAEILNRPLEELRLITCHLGNGCSLAAIRGGRSVDTTMGYTPLEGLMMGSRSGSVDPGILIHQLRQGMSVDELDRILNRESGLKGVSGLSSDMRVVLEAMEAGHARAELAFELFVHRLRSQIGAMLMSLDRLDALVFSGGIGENSAPVRAAACADLGFLGIQIDPVLNAGSPRNCDISTSDAPVRVLVISAQEDWAIATACQNLLQGE.

Asn-7 is a binding site for Mg(2+). Lys-14 is a binding site for ATP. Residue Arg-97 participates in substrate binding. Asp-154 serves as the catalytic Proton donor/acceptor. ATP is bound by residues 213 to 217, 287 to 289, and 335 to 339; these read HLGNG, DMR, and GIGEN. Glu-388 lines the Mg(2+) pocket.

The protein belongs to the acetokinase family. In terms of assembly, homodimer. Requires Mg(2+) as cofactor. Mn(2+) serves as cofactor.

It localises to the cytoplasm. It catalyses the reaction acetate + ATP = acetyl phosphate + ADP. It participates in metabolic intermediate biosynthesis; acetyl-CoA biosynthesis; acetyl-CoA from acetate: step 1/2. Its function is as follows. Catalyzes the formation of acetyl phosphate from acetate and ATP. Can also catalyze the reverse reaction. This Synechococcus sp. (strain JA-2-3B'a(2-13)) (Cyanobacteria bacterium Yellowstone B-Prime) protein is Acetate kinase.